Reading from the N-terminus, the 617-residue chain is DNA mismatch repair protein MutL (617 aa).

The interval 363–394 (YAPAYGARPPQPSAWSVDTSPHRPLDDGQNRF) is disordered. The segment covering 382–392 (SPHRPLDDGQN) has biased composition (basic and acidic residues).

The protein belongs to the DNA mismatch repair MutL/HexB family.

Functionally, this protein is involved in the repair of mismatches in DNA. It is required for dam-dependent methyl-directed DNA mismatch repair. May act as a 'molecular matchmaker', a protein that promotes the formation of a stable complex between two or more DNA-binding proteins in an ATP-dependent manner without itself being part of a final effector complex. In Allorhizobium ampelinum (strain ATCC BAA-846 / DSM 112012 / S4) (Agrobacterium vitis (strain S4)), this protein is DNA mismatch repair protein MutL.